The chain runs to 288 residues: Hyaluronidase (288 aa).

Asparagine 36 carries an N-linked (GlcNAc...) asparagine glycan. Catalysis depends on glutamate 66, which acts as the Proton donor. The cysteines at positions 142 and 154 are disulfide-linked. N-linked (GlcNAc...) asparagine glycosylation is present at asparagine 282.

The protein belongs to the glycosyl hydrolase 56 family. As to expression, expressed by the venom gland.

Its subcellular location is the secreted. The enzyme catalyses Random hydrolysis of (1-&gt;4)-linkages between N-acetyl-beta-D-glucosamine and D-glucuronate residues in hyaluronate.. Hydrolyzes high molecular weight hyaluronic acid to produce small oligosaccharides. The chain is Hyaluronidase from Polybia paulista (Neotropical social wasp).